The following is a 355-amino-acid chain: Ubiquinone biosynthesis protein COQ4 homolog, mitochondrial (355 aa).

Positions 134, 135, 138, and 150 each coordinate Zn(2+).

The protein belongs to the COQ4 family. As to quaternary structure, component of a multi-subunit COQ enzyme complex. The cofactor is Zn(2+).

Its subcellular location is the mitochondrion inner membrane. The enzyme catalyses a 4-hydroxy-3-methoxy-5-(all-trans-polyprenyl)benzoate + H(+) = a 2-methoxy-6-(all-trans-polyprenyl)phenol + CO2. The protein operates within cofactor biosynthesis; ubiquinone biosynthesis. Its function is as follows. Lyase that catalyzes the C1-decarboxylation of 4-hydroxy-3-methoxy-5-(all-trans-polyprenyl)benzoic acid into 2-methoxy-6-(all-trans-polyprenyl)phenol during ubiquinone biosynthesis. The protein is Ubiquinone biosynthesis protein COQ4 homolog, mitochondrial of Plasmodium knowlesi (strain H).